The chain runs to 382 residues: Lipid-A-disaccharide synthase (382 aa).

The protein belongs to the LpxB family.

The enzyme catalyses 2-N,3-O-bis[(3R)-3-hydroxytetradecanoyl]-alpha-D-glucosaminyl 1-phosphate + UDP-2-N,3-O-bis[(3R)-3-hydroxytetradecanoyl]-alpha-D-glucosamine = lipid A disaccharide (E. coli) + UDP + H(+). It catalyses the reaction a lipid X + a UDP-2-N,3-O-bis[(3R)-3-hydroxyacyl]-alpha-D-glucosamine = a lipid A disaccharide + UDP + H(+). Its pathway is glycolipid biosynthesis; lipid IV(A) biosynthesis; lipid IV(A) from (3R)-3-hydroxytetradecanoyl-[acyl-carrier-protein] and UDP-N-acetyl-alpha-D-glucosamine: step 5/6. In terms of biological role, condensation of UDP-2,3-diacylglucosamine and 2,3-diacylglucosamine-1-phosphate to form lipid A disaccharide, a precursor of lipid A, a phosphorylated glycolipid that anchors the lipopolysaccharide to the outer membrane of the cell. The chain is Lipid-A-disaccharide synthase from Escherichia coli O157:H7.